Here is a 62-residue protein sequence, read N- to C-terminus: Photosystem II reaction center protein Z (62 aa).

2 helical membrane passes run 8–28 (ALFA…VAFA) and 41–61 (FSGA…NSFI).

This sequence belongs to the PsbZ family. PSII is composed of 1 copy each of membrane proteins PsbA, PsbB, PsbC, PsbD, PsbE, PsbF, PsbH, PsbI, PsbJ, PsbK, PsbL, PsbM, PsbT, PsbY, PsbZ, Psb30/Ycf12, at least 3 peripheral proteins of the oxygen-evolving complex and a large number of cofactors. It forms dimeric complexes.

It localises to the plastid. The protein resides in the chloroplast thylakoid membrane. Its function is as follows. May control the interaction of photosystem II (PSII) cores with the light-harvesting antenna, regulates electron flow through the 2 photosystem reaction centers. PSII is a light-driven water plastoquinone oxidoreductase, using light energy to abstract electrons from H(2)O, generating a proton gradient subsequently used for ATP formation. This chain is Photosystem II reaction center protein Z, found in Adiantum capillus-veneris (Maidenhair fern).